The chain runs to 89 residues: Transcriptional regulator WhiB2 (89 aa).

Residues 1–15 (MVPEAPAPFEEPLPP) show a composition bias toward pro residues. Positions 1–24 (MVPEAPAPFEEPLPPEATDQWQDR) are disordered. A 4Fe-4S Wbl-type domain is found at 26–83 (LCAQTDPEAFFPEKGGSTREAKKICMGCEVRHECLEYALAHDERFGIWGGLSERERRR). C27 is a binding site for [4Fe-4S] cluster. S42 is subject to Phosphoserine. Residues C50, C53, and C59 each coordinate [4Fe-4S] cluster.

It belongs to the WhiB family. [4Fe-4S] cluster serves as cofactor. May be phosphorylated, possibly on Ser-42. In terms of processing, the cluster is degraded quickly in the presence of air. Upon cluster removal intramolecular disulfide bonds are formed. Post-translationally, the Fe-S cluster can be nitrosylated by nitric oxide (NO).

It is found in the cytoplasm. Its function is as follows. Acts as a transcriptional regulator. Probably redox-responsive. The apo- but not holo-form probably binds DNA. The apo-form functions as a chaperone, preventing aggregation or helping in correct refolding of a number of substrates; this activity does not require ATP or the ability to bind a Fe-S cluster. Chaperone activity is insensitive to the redox state of its cysteine residues. The apo-form has no protein disulfide reductase activity. The apo-form binds to its own promoter. The chain is Transcriptional regulator WhiB2 (whiB2) from Mycobacterium tuberculosis (strain ATCC 25618 / H37Rv).